The following is a 144-amino-acid chain: HTH-type transcriptional regulator MntR (144 aa).

The HTH dtxR-type domain occupies 1–63 (MTTPSMEDYI…YEKYRGLILT (63 aa)). Mn(2+)-binding residues include aspartate 8, glutamate 11, histidine 77, glutamate 99, glutamate 102, and histidine 103.

Belongs to the DtxR/MntR family. Homodimer.

The protein localises to the cytoplasm. DNA binding is strongly activated by Mn(2+). Its function is as follows. Central regulator of manganese homeostasis. This Bacillus pumilus (strain SAFR-032) protein is HTH-type transcriptional regulator MntR.